The following is a 217-amino-acid chain: Transcription antitermination protein NusB (217 aa).

Belongs to the NusB family.

Its function is as follows. Involved in transcription antitermination. Required for transcription of ribosomal RNA (rRNA) genes. Binds specifically to the boxA antiterminator sequence of the ribosomal RNA (rrn) operons. The protein is Transcription antitermination protein NusB of Microcystis aeruginosa (strain NIES-843 / IAM M-2473).